The following is a 755-amino-acid chain: MCKDSACFSTMKETDLEAVATAVQRVAGMLQRPDQLDKVEQYRRREARKKASVEARLKAAIQSQLDGVRTGLSQLHNALNDVKDIQQSLADVSKDWRQSINTIESLKDVKDAVVQHSQLAAAVENLKNIFSVPEIVRETQDLIEQGALLQAHRKLMDLECSRDGLMCEQYRMDSGNKRDMTLIHGYFGSTQGLSDELAKQLWMVLQRSLVTVRRDPTLLVSVVRIIEREEKIDRRILDRKKQTGFVPPGRPKNWKEKMFAVLDRTVTTRIEGTQADTRESDKMWLVRHLEIIRKYVLDDLVIAKNLLVQCFPPHYDIFKNLLSMYHQALSIRMQDLASEDLEANEIVSLLTWVLNTYTSAEMMGNVELAPEVDVNALEPLLSPNVVSELLDTYMSTLTSNIIAWLRKALETDKKDWSKETEPEADQDGYYQTTLPAIVFQMFEQNLQVAAQISEDLKTKVLVLCLQQMNSFLSRYKEEAQLYKEEHLRNRQHPHCYVQYMVAIINNCQTFKESIISLKRKYLKPETEESLCQSQPSMDGILDAIAKEGCSSLLEEVFLDLEQHLNELMTKKWMLGSNAVDIICVTVEDYFNDFAKIKKPYKKRMTAEAHRRVVVEYLRAVMQKRISFRSAEERKEGAEKMVREAEQLRFLFRKLASGFGEDADGHCDTIVAVAEVIKLTDPSLLYLEVSTLVSKYPDIRDDHIGALLALRGDASRDMKQTIMETLEQGPMQASPNYVPIFQEIVVPSLNVAKLLK.

Coiled-coil stretches lie at residues 34–62 (DQLDKVEQYRRREARKKASVEARLKAAIQ) and 618–649 (RAVMQKRISFRSAEERKEGAEKMVREAEQLRF). At Lys-38 the chain carries N6-acetyllysine.

This sequence belongs to the SEC6 family. In terms of assembly, the exocyst complex is composed of EXOC1, EXOC2, EXOC3, EXOC4, EXOC5, EXOC6, EXOC7 and EXOC8. Interacts with EXOC3L1. Interacts with BIRC6/bruce. Interacts with MYRIP. Interacts with SLC6A9. In terms of tissue distribution, widely expressed, with highest levels in kidney, followed by brain (at protein level).

It localises to the cytoplasm. The protein resides in the perinuclear region. It is found in the cell projection. Its subcellular location is the growth cone. The protein localises to the neuron projection. It localises to the midbody. The protein resides in the golgi apparatus. Its function is as follows. Component of the exocyst complex involved in the docking of exocytic vesicles with fusion sites on the plasma membrane. The sequence is that of Exocyst complex component 3 (Exoc3) from Rattus norvegicus (Rat).